Consider the following 459-residue polypeptide: Ribulose bisphosphate carboxylase (459 aa).

Asn-111 lines the substrate pocket. The Proton acceptor role is filled by Lys-166. Residue Lys-168 coordinates substrate. Residues Lys-191, Asp-193, and Glu-194 each coordinate Mg(2+). The residue at position 191 (Lys-191) is an N6-carboxylysine. His-287 (proton acceptor) is an active-site residue. 3 residues coordinate substrate: Arg-288, His-321, and Ser-368.

It belongs to the RuBisCO large chain family. Type II subfamily. Homodimer. Mg(2+) serves as cofactor.

The enzyme catalyses 2 (2R)-3-phosphoglycerate + 2 H(+) = D-ribulose 1,5-bisphosphate + CO2 + H2O. It catalyses the reaction D-ribulose 1,5-bisphosphate + O2 = 2-phosphoglycolate + (2R)-3-phosphoglycerate + 2 H(+). RuBisCO catalyzes two reactions: the carboxylation of D-ribulose 1,5-bisphosphate, the primary event in carbon dioxide fixation, as well as the oxidative fragmentation of the pentose substrate. Both reactions occur simultaneously and in competition at the same active site. This chain is Ribulose bisphosphate carboxylase, found in Dechloromonas aromatica (strain RCB).